The following is a 565-amino-acid chain: MEGSTVRSDLIKKGPDRAPHRALLKATGVTDADMGKPFIGIANSYIDIVPGHVHLKEFGDLVKEAVREAGGVPFIFNTIGVDDGIAMGHIGMRYSLPSRELIADAVETVIEAHQLDALICIPNCDKITPGMLMAAMRVNIPTIFISGGPMAAGRLKDGRRADLITIFEGVGAHSRGMISDEELKELEDLACPSCGSCSGMFTANSMNCLCEALGLALPGNGTALARSAEREALARAAARRIVEMALAGGPRPRDIVTPEAIDNAFALDIAMGGSTNTVLHTLAVATEAGIAYPLERINALSARVPYLCKVSPATAEVHIEDVHAAGGVMAILKELSRKEGTLHPHCLTVTGKTIGELWAEAENRNREVIRPVEDPYAETGGLAILFGNLAPDGAALKVGAVDPSITTFTGRAICFDSQDEALQGIFGGRVQPGHVVVIRYEGPKGGPGMPEMLAPTSAIVGMGLGKEVALITDGRFSGGTRGICLGHISPEAAEGGPIALVRDGDVITIDIPGRRLTLEVPADELERRRAAWVKPAPKVRKGWLGRYAALVTSANTGAVLRTPEE.

Mg(2+) is bound at residue aspartate 83. Cysteine 124 serves as a coordination point for [2Fe-2S] cluster. Mg(2+)-binding residues include aspartate 125 and lysine 126. Lysine 126 is modified (N6-carboxylysine). Cysteine 197 is a binding site for [2Fe-2S] cluster. Glutamate 451 contacts Mg(2+). Catalysis depends on serine 477, which acts as the Proton acceptor.

The protein belongs to the IlvD/Edd family. In terms of assembly, homodimer. [2Fe-2S] cluster serves as cofactor. Mg(2+) is required as a cofactor.

The enzyme catalyses (2R)-2,3-dihydroxy-3-methylbutanoate = 3-methyl-2-oxobutanoate + H2O. The catalysed reaction is (2R,3R)-2,3-dihydroxy-3-methylpentanoate = (S)-3-methyl-2-oxopentanoate + H2O. It participates in amino-acid biosynthesis; L-isoleucine biosynthesis; L-isoleucine from 2-oxobutanoate: step 3/4. The protein operates within amino-acid biosynthesis; L-valine biosynthesis; L-valine from pyruvate: step 3/4. Its function is as follows. Functions in the biosynthesis of branched-chain amino acids. Catalyzes the dehydration of (2R,3R)-2,3-dihydroxy-3-methylpentanoate (2,3-dihydroxy-3-methylvalerate) into 2-oxo-3-methylpentanoate (2-oxo-3-methylvalerate) and of (2R)-2,3-dihydroxy-3-methylbutanoate (2,3-dihydroxyisovalerate) into 2-oxo-3-methylbutanoate (2-oxoisovalerate), the penultimate precursor to L-isoleucine and L-valine, respectively. The polypeptide is Dihydroxy-acid dehydratase (Symbiobacterium thermophilum (strain DSM 24528 / JCM 14929 / IAM 14863 / T)).